Here is a 132-residue protein sequence, read N- to C-terminus: Small ribosomal subunit protein uS8 (132 aa).

The protein belongs to the universal ribosomal protein uS8 family. Part of the 30S ribosomal subunit. Contacts proteins S5 and S12.

Functionally, one of the primary rRNA binding proteins, it binds directly to 16S rRNA central domain where it helps coordinate assembly of the platform of the 30S subunit. The protein is Small ribosomal subunit protein uS8 of Allorhizobium ampelinum (strain ATCC BAA-846 / DSM 112012 / S4) (Agrobacterium vitis (strain S4)).